Reading from the N-terminus, the 364-residue chain is Putative F-box/kelch-repeat protein At1g12170 (364 aa).

Residues 1 to 50 (MMHVILPWELVEEILYRVPPLSLTRFKIVCKQWNTLFKSKSFVNNHLVRV) enclose the F-box domain. Kelch repeat units follow at residues 156 to 205 (SIYN…LNGN) and 328 to 364 (CVYI…IPVP).

This Arabidopsis thaliana (Mouse-ear cress) protein is Putative F-box/kelch-repeat protein At1g12170.